Here is a 458-residue protein sequence, read N- to C-terminus: Exodeoxyribonuclease 7 large subunit (458 aa).

This sequence belongs to the XseA family. Heterooligomer composed of large and small subunits.

It is found in the cytoplasm. It carries out the reaction Exonucleolytic cleavage in either 5'- to 3'- or 3'- to 5'-direction to yield nucleoside 5'-phosphates.. Functionally, bidirectionally degrades single-stranded DNA into large acid-insoluble oligonucleotides, which are then degraded further into small acid-soluble oligonucleotides. The chain is Exodeoxyribonuclease 7 large subunit from Yersinia enterocolitica serotype O:8 / biotype 1B (strain NCTC 13174 / 8081).